An 85-amino-acid polypeptide reads, in one-letter code: MRWRPSSWSAVRLRRGRSSGCPIVVGKMPAEPADLDRDGYPAGRGRASVEGEGGRHADRHGGPQAQELPHDQRPADQEQCGQHCR.

Positions 1-85 (MRWRPSSWSA…DQEQCGQHCR (85 aa)) are disordered. Residues 47–61 (ASVEGEGGRHADRHG) are compositionally biased toward basic and acidic residues.

This is an uncharacterized protein from Streptomyces lividans.